The primary structure comprises 243 residues: Venom peptide isomerase heavy chain (243 aa).

The region spanning Ile1–Val243 is the Peptidase S1 domain. Cys31 and Cys47 are joined by a disulfide. Active-site charge relay system residues include His46 and Asp96. Residue Asn127 is glycosylated (N-linked (GlcNAc...) asparagine). 2 disulfides stabilise this stretch: Cys159-Cys181 and Cys190-Cys219. Ser194 (charge relay system) is an active-site residue.

It belongs to the peptidase S1 family. As to quaternary structure, heterodimer with venom peptide isomerase light chain; disulfide-linked. Post-translationally, N-linked glycan at Asn-127 consists of Man3-GlcNAc2-Fuc. In terms of tissue distribution, expressed by the venom gland.

It is found in the secreted. In terms of biological role, peptide isomerase that inverts the chirality at the Ser-81 of omega-Aga IVB. Acts cofactor-independently. This chain is Venom peptide isomerase heavy chain, found in Agelenopsis aperta (North American funnel-web spider).